Here is a 176-residue protein sequence, read N- to C-terminus: Mitochondrial inner membrane protein Mpv17 (176 aa).

The next 4 helical transmembrane spans lie at 18 to 38, 57 to 77, 94 to 114, and 131 to 151; these read VQVL…QQLV, LGCG…DHLI, GGFA…LNGM, and LITN…LVPL.

It belongs to the peroxisomal membrane protein PXMP2/4 family.

Its subcellular location is the mitochondrion inner membrane. Functionally, non-selective channel that modulates the membrane potential under normal conditions and oxidative stress, and is involved in mitochondrial homeostasis. Involved in mitochondrial deoxynucleoside triphosphates (dNTP) pool homeostasis and mitochondrial DNA (mtDNA) maintenance. May be involved in the regulation of reactive oxygen species metabolism and the control of oxidative phosphorylation. This is Mitochondrial inner membrane protein Mpv17 from Rattus norvegicus (Rat).